Here is an 860-residue protein sequence, read N- to C-terminus: Protein argonaute-2 (860 aa).

Y2 carries the post-translational modification 3'-nitrotyrosine. The PAZ domain maps to 230 to 349 (PVIEFVCEVL…LPLEVCNIVA (120 aa)). Residues 312-317 (YFKDRH) form an interaction with guide RNA region. S388 carries the post-translational modification Phosphoserine. Residues 518–819 (LVVVILPGKT…VAFRARYHLV (302 aa)) form the Piwi domain. The interval 525–567 (GKTPVYAEVKRVGDTVLGMATQCVQMKNVQRTTPQTLSNLCLK) is interaction with guide RNA. The interval 588–591 (FQQP) is interaction with GW182 family members. Residue D598 participates in a divalent metal cation binding. The segment at 651–661 (LIQFYKSTRFK) is interaction with GW182 family members. D670 lines the a divalent metal cation pocket. The residue at position 701 (P701) is a 4-hydroxyproline. 3 interaction with guide RNA regions span residues 710-711 (KR), 754-762 (HAGIQGTSR), and 791-813 (YVRC…VAFR). A divalent metal cation is bound at residue H808. Phosphoserine is present on residues S825, S829, S832, and S835.

This sequence belongs to the argonaute family. Ago subfamily. In terms of assembly, interacts with DICER1 through its Piwi domain and with TARBP2 during assembly of the RNA-induced silencing complex (RISC). Together, DICER1, AGO2 and TARBP2 constitute the trimeric RISC loading complex (RLC), or micro-RNA (miRNA) loading complex (miRLC). Within the RLC/miRLC, DICER1 and TARBP2 are required to process precursor miRNAs (pre-miRNAs) to mature miRNAs and then load them onto AGO2. AGO2 bound to the mature miRNA constitutes the minimal RISC and may subsequently dissociate from DICER1 and TARBP2. Note however that the term RISC has also been used to describe the trimeric RLC/miRLC. The formation of RISC complexes containing siRNAs rather than miRNAs appears to occur independently of DICER1. Interacts with AGO1. Also interacts with DDB1, DDX5, DDX6, DDX20, DHX30, DHX36, DDX47, DHX9, ELAVL, FXR1, GEMIN4, HNRNPF, IGF2BP1, ILF3, IMP8, MATR3, PABPC1, PRMT5, P4HA1, P4HB, RBM4, SART3, TNRC6A, TNRC6B, UPF1 and YBX1. Interacts with the P-body components DCP1A and XRN1. Associates with polysomes and messenger ribonucleoproteins (mNRPs). Interacts with RBM4; the interaction is modulated under stress-induced conditions, occurs under both cell proliferation and differentiation conditions and in an RNA- and phosphorylation-independent manner. Interacts with LIMD1, WTIP and AJUBA. Interacts with TRIM71. Interacts with APOBEC3G in an RNA-dependent manner. Interacts with APOBEC3A, APOBEC3C, APOBEC3F and APOBEC3H. Interacts with DICER1, TARBP2, EIF6, MOV10 and RPL7A (60S ribosome subunit); they form a large RNA-induced silencing complex (RISC). Interacts with FMR1. Interacts with ZFP36. Interacts with RC3H1; the interaction is RNA independent. Interacts with ARB2A. Found in a complex composed of AGO2, CHD7 and ARB2A. Interacts with SND1 and SYT11. Interacts with CLNK. Interacts with GARRE1. Interacts with GRB2; this interaction is important for the formation of a ternary complex containing GRB2, AGO2 and DICER1. Mg(2+) serves as cofactor. Requires Mn(2+) as cofactor. Post-translationally, hydroxylated. 4-hydroxylation appears to enhance protein stability but is not required for miRNA-binding or endonuclease activity. In terms of processing, ubiquitinated on surface-exposed lysines by a SCF-like E3 ubiquitin-protein ligase complex containing ZSWIM8 during target-directed microRNA degradation (TDMD), a process that mediates degradation of microRNAs (miRNAs). Ubiquitination by the SCF-like E3 ubiquitin-protein ligase complex containing ZSWIM8 leads to its subsequent degradation, thereby exposing miRNAs for degradation. ZSWIM8 recognizes and binds AGO2 when it is engaged with a TDMD target. Phosphorylation at Ser-388 by AKT3; leads to up-regulate translational repression of microRNA target and down-regulate endonucleolytic cleavage. Post-translationally, a phosphorylation cycle of C-terminal serine cluster (Ser-825-Ser-835) regulates the release of target mRNAs. Target-binding leads to phosphorylation of these residues by CSNK1A1, which reduces the affinity of AGO2 for mRNA and enables target release. The ANKRD52-PPP6C phosphatase complex dephosphorylates the residues, which primes AGO2 for binding a new target. As to expression, ubiquitous expression in 9.5 day embryos with highest levels in forebrain, heart, limb buds, and branchial arches.

The protein resides in the cytoplasm. Its subcellular location is the P-body. The protein localises to the nucleus. It carries out the reaction Endonucleolytic cleavage to 5'-phosphomonoester.. Required for RNA-mediated gene silencing (RNAi) by the RNA-induced silencing complex (RISC). The 'minimal RISC' appears to include AGO2 bound to a short guide RNA such as a microRNA (miRNA) or short interfering RNA (siRNA). These guide RNAs direct RISC to complementary mRNAs that are targets for RISC-mediated gene silencing. The precise mechanism of gene silencing depends on the degree of complementarity between the miRNA or siRNA and its target. Binding of RISC to a perfectly complementary mRNA generally results in silencing due to endonucleolytic cleavage of the mRNA specifically by AGO2. Binding of RISC to a partially complementary mRNA results in silencing through inhibition of translation, and this is independent of endonuclease activity. May inhibit translation initiation by binding to the 7-methylguanosine cap, thereby preventing the recruitment of the translation initiation factor eIF4-E. May also inhibit translation initiation via interaction with EIF6, which itself binds to the 60S ribosomal subunit and prevents its association with the 40S ribosomal subunit. The inhibition of translational initiation leads to the accumulation of the affected mRNA in cytoplasmic processing bodies (P-bodies), where mRNA degradation may subsequently occur. In some cases RISC-mediated translational repression is also observed for miRNAs that perfectly match the 3' untranslated region (3'-UTR). Can also up-regulate the translation of specific mRNAs under certain growth conditions. Binds to the AU element of the 3'-UTR of the TNF (TNF-alpha) mRNA and up-regulates translation under conditions of serum starvation. Also required for transcriptional gene silencing (TGS), in which short RNAs known as antigene RNAs or agRNAs direct the transcriptional repression of complementary promoter regions. Regulates lymphoid and erythroid development and function, and this is independent of endonuclease activity. This chain is Protein argonaute-2 (Ago2), found in Mus musculus (Mouse).